Reading from the N-terminus, the 237-residue chain is Ribose-5-phosphate isomerase A (237 aa).

Substrate contacts are provided by residues 28–31, 83–86, and 97–100; these read SGST, DGAD, and KGRG. Glutamate 106 acts as the Proton acceptor in catalysis. Lysine 124 is a substrate binding site.

This sequence belongs to the ribose 5-phosphate isomerase family. In terms of assembly, homodimer.

The catalysed reaction is aldehydo-D-ribose 5-phosphate = D-ribulose 5-phosphate. Its pathway is carbohydrate degradation; pentose phosphate pathway; D-ribose 5-phosphate from D-ribulose 5-phosphate (non-oxidative stage): step 1/1. Catalyzes the reversible conversion of ribose-5-phosphate to ribulose 5-phosphate. The chain is Ribose-5-phosphate isomerase A from Thermomicrobium roseum (strain ATCC 27502 / DSM 5159 / P-2).